The chain runs to 482 residues: Putative alpha-L-fucosidase (482 aa).

The signal sequence occupies residues 1–16 (MIFLIFSILFLHLANC). Asn182, Asn343, Asn359, and Asn419 each carry an N-linked (GlcNAc...) asparagine glycan.

The protein belongs to the glycosyl hydrolase 29 family.

The catalysed reaction is an alpha-L-fucoside + H2O = L-fucose + an alcohol. In terms of biological role, alpha-L-fucosidase is responsible for hydrolyzing the alpha-1,6-linked fucose joined to the reducing-end N-acetylglucosamine of the carbohydrate moieties of glycoproteins. The polypeptide is Putative alpha-L-fucosidase (Caenorhabditis elegans).